The following is a 180-amino-acid chain: Acireductone dioxygenase (180 aa).

Residues His96, His98, Glu102, and His140 each contribute to the Fe(2+) site. Positions 96, 98, 102, and 140 each coordinate Ni(2+).

It belongs to the acireductone dioxygenase (ARD) family. Monomer. Fe(2+) is required as a cofactor. It depends on Ni(2+) as a cofactor.

It catalyses the reaction 1,2-dihydroxy-5-(methylsulfanyl)pent-1-en-3-one + O2 = 3-(methylsulfanyl)propanoate + CO + formate + 2 H(+). It carries out the reaction 1,2-dihydroxy-5-(methylsulfanyl)pent-1-en-3-one + O2 = 4-methylsulfanyl-2-oxobutanoate + formate + 2 H(+). Its pathway is amino-acid biosynthesis; L-methionine biosynthesis via salvage pathway; L-methionine from S-methyl-5-thio-alpha-D-ribose 1-phosphate: step 5/6. Catalyzes 2 different reactions between oxygen and the acireductone 1,2-dihydroxy-3-keto-5-methylthiopentene (DHK-MTPene) depending upon the metal bound in the active site. Fe-containing acireductone dioxygenase (Fe-ARD) produces formate and 2-keto-4-methylthiobutyrate (KMTB), the alpha-ketoacid precursor of methionine in the methionine recycle pathway. Ni-containing acireductone dioxygenase (Ni-ARD) produces methylthiopropionate, carbon monoxide and formate, and does not lie on the methionine recycle pathway. This Synechococcus sp. (strain WH7803) protein is Acireductone dioxygenase.